The chain runs to 354 residues: Histidinol-phosphate aminotransferase (354 aa).

Position 210 is an N6-(pyridoxal phosphate)lysine (lysine 210).

Belongs to the class-II pyridoxal-phosphate-dependent aminotransferase family. Histidinol-phosphate aminotransferase subfamily. In terms of assembly, homodimer. Requires pyridoxal 5'-phosphate as cofactor.

The catalysed reaction is L-histidinol phosphate + 2-oxoglutarate = 3-(imidazol-4-yl)-2-oxopropyl phosphate + L-glutamate. It functions in the pathway amino-acid biosynthesis; L-histidine biosynthesis; L-histidine from 5-phospho-alpha-D-ribose 1-diphosphate: step 7/9. This Clostridium botulinum (strain 657 / Type Ba4) protein is Histidinol-phosphate aminotransferase.